A 293-amino-acid chain; its full sequence is tRNA-cytidine(32) 2-sulfurtransferase (293 aa).

Positions Ser-62–Ser-67 match the PP-loop motif motif. [4Fe-4S] cluster is bound by residues Cys-137, Cys-140, and Cys-228.

It belongs to the TtcA family. As to quaternary structure, homodimer. Mg(2+) serves as cofactor. It depends on [4Fe-4S] cluster as a cofactor.

It is found in the cytoplasm. It carries out the reaction cytidine(32) in tRNA + S-sulfanyl-L-cysteinyl-[cysteine desulfurase] + AH2 + ATP = 2-thiocytidine(32) in tRNA + L-cysteinyl-[cysteine desulfurase] + A + AMP + diphosphate + H(+). It functions in the pathway tRNA modification. In terms of biological role, catalyzes the ATP-dependent 2-thiolation of cytidine in position 32 of tRNA, to form 2-thiocytidine (s(2)C32). The sulfur atoms are provided by the cysteine/cysteine desulfurase (IscS) system. The chain is tRNA-cytidine(32) 2-sulfurtransferase from Brucella melitensis biotype 1 (strain ATCC 23456 / CCUG 17765 / NCTC 10094 / 16M).